Reading from the N-terminus, the 311-residue chain is tRNA dimethylallyltransferase (311 aa).

Residue Gly16 to Ser23 coordinates ATP. Thr18 to Ser23 contributes to the substrate binding site. Positions Asp41–Gln44 are interaction with substrate tRNA.

It belongs to the IPP transferase family. In terms of assembly, monomer. It depends on Mg(2+) as a cofactor.

It carries out the reaction adenosine(37) in tRNA + dimethylallyl diphosphate = N(6)-dimethylallyladenosine(37) in tRNA + diphosphate. Functionally, catalyzes the transfer of a dimethylallyl group onto the adenine at position 37 in tRNAs that read codons beginning with uridine, leading to the formation of N6-(dimethylallyl)adenosine (i(6)A). The polypeptide is tRNA dimethylallyltransferase (Geobacter sulfurreducens (strain ATCC 51573 / DSM 12127 / PCA)).